We begin with the raw amino-acid sequence, 209 residues long: 2-phospho-L-lactate guanylyltransferase (209 aa).

It belongs to the CofC family. As to quaternary structure, homodimer.

The catalysed reaction is (2S)-2-phospholactate + GTP + H(+) = (2S)-lactyl-2-diphospho-5'-guanosine + diphosphate. The protein operates within cofactor biosynthesis; coenzyme F420 biosynthesis. Functionally, guanylyltransferase that catalyzes the activation of (2S)-2-phospholactate (2-PL) as (2S)-lactyl-2-diphospho-5'-guanosine, via the condensation of 2-PL with GTP. It is involved in the biosynthesis of coenzyme F420, a hydride carrier cofactor. In Methanosphaerula palustris (strain ATCC BAA-1556 / DSM 19958 / E1-9c), this protein is 2-phospho-L-lactate guanylyltransferase.